The primary structure comprises 373 residues: Tomoregulin-1 (373 aa).

The first 36 residues, 1 to 36 (MGAQAPLRLPAAPPLAVCGYTSVLLLFAFCLPGSGA), serve as a signal peptide directing secretion. At 37-323 (SNQPAGGGGD…VPSRQKLTHV (287 aa)) the chain is on the extracellular side. Residue N56 is glycosylated (N-linked (GlcNAc...) asparagine). Residues 91–138 (ACQFQCHTNYIPVCGSNGDTYQNECFLRRAACKHQKDITVVARGPCYS) enclose the Kazal-like 1 domain. Cystine bridges form between C92-C122, C96-C115, and C104-C136. N-linked (GlcNAc...) asparagine glycosylation is present at N140. Positions 140–162 (NGSGSGEGEEEGSGAGAHRKHSK) are disordered. Positions 182 to 230 (VCNIDCSGYSFNPVCASDGSSYNNPCFVREASCIRQEQIDIRHLGHCTD) constitute a Kazal-like 2 domain. 6 cysteine pairs are disulfide-bonded: C183-C214, C187-C207, C196-C228, C268-C281, C276-C292, and C294-C303. The EGF-like domain maps to 264 to 304 (SHMPCPENLNGYCIHGKCEFIYSTQKASCRCESGYTGQHCE). Residues 324–344 (LIAAIIGAVQIAIIVAIVMCI) traverse the membrane as a helical segment. Residues 345-373 (TRKCPKNNRGRRQKQNLGHFTSETSSRMV) are Cytoplasmic-facing. The tract at residues 352–373 (NRGRRQKQNLGHFTSETSSRMV) is disordered. Polar residues predominate over residues 359–373 (QNLGHFTSETSSRMV).

It belongs to the tomoregulin family. May interact with ST14.

It is found in the cell membrane. Neuron-specific restriction factor that prevents herpes simplex virus 1 (HHV-1) infection in the brain by blocking viral entry. Also able to restrict herpes simplex virus 2 (HHV-2) infection, although to a lesser extent. Acts by preventing the association between the viral glycoprotein D (gD) and its cell surface receptor NECTIN1, thereby inhibiting fusion of the virus and the cell membrane. Also able to prevent the association between the viral glycoprotein B (gB) and MYH9/NMMHC-IIA and MYH10/NMMHC-IIB receptors. This Rattus norvegicus (Rat) protein is Tomoregulin-1 (Tmeff1).